The chain runs to 756 residues: LIM domain and actin-binding protein 1 (756 aa).

An N-acetylmethionine modification is found at M1. Residues S15 and S55 each carry the phosphoserine modification. Residues 44 to 56 (AAEEANMEKRRSN) show a composition bias toward basic and acidic residues. Disordered stretches follow at residues 44–183 (AAEE…SNKI) and 204–377 (QTKI…AVKK). Residues 107-118 (EVASSSASGVEA) show a composition bias toward low complexity. A Phosphoserine modification is found at S130. The segment covering 140 to 173 (RIKDTEHLKDHSAESKKMENCLAESRHEVGKPET) has biased composition (basic and acidic residues). Residues 164-166 (SRH) carry the Required for interaction with NPC1L1 motif. S221 bears the Phosphoserine mark. Residue Y225 is modified to Phosphotyrosine. Residues S226 and S238 each carry the phosphoserine modification. A compositionally biased stretch (basic and acidic residues) spans 245–254 (EKSESRRNLE). Phosphoserine is present on S259. Over residues 274–287 (VSKQSSSTNYTNEL) the composition is skewed to polar residues. Residues 294–303 (IKTHKLEQKE) show a composition bias toward basic and acidic residues. 5 positions are modified to phosphoserine: S339, S346, S358, S365, and S370. Residues 384–444 (ETCVECQKTV…KPHFNQLFKS (61 aa)) form the LIM zinc-binding domain. Residue K435 is modified to N6-succinyllysine. Phosphoserine is present on S486. The required for interaction with MYO5B stretch occupies residues 489 to 509 (VEDAPIAKVGVLTASMEAKAS). The tract at residues 508-726 (ASSQLEKEDK…TTQKQKSQDV (219 aa)) is disordered. A compositionally biased stretch (basic and acidic residues) spans 512 to 523 (LEKEDKPAETKK). The segment covering 533-542 (ELSSSGSALE) has biased composition (low complexity). Basic and acidic residues predominate over residues 552-563 (WPPEDEVSKPEA). Phosphoserine occurs at positions 597, 600, 605, and 613. The segment covering 627-637 (AERKQMEKASA) has biased composition (basic and acidic residues). Residues 638 to 651 (SEKNGSVGKTTWPS) are compositionally biased toward polar residues. Residues 652–667 (KESRGGEAAGRSKEVQ) are compositionally biased toward basic and acidic residues. Over residues 691-721 (LQQQSPLEPKSKNWSSFADNTSAKEFTTQKQ) the composition is skewed to polar residues. Phosphoserine occurs at positions 695, 723, and 738.

Interacts with NPC1L1; bridges NPC1L1 with MYO5B. Interacts with MYO5B; bridges MYO5B with NPC1L1. Interacts with PXN; this complex stabilizes actin dynamics. Interacts with F-actin and G-actin. Interacts with LUZP1 (via C-terminus); both proteins restrict ciliation and may work together to regulate this process. Binds RAB40B (GTP-bound); interaction influences LIMA1 subcellular localization in lamellipodia during cell migration. In terms of processing, phosphorylation of the C-terminal region by MAPK1/MAPK3 reduces its association with F-actin and contributes to actin filament reorganization and enhances cell motility. Ubiquitinated by the ECS(RAB40B) complex leading to its degradation. In terms of tissue distribution, widely expressed. Highest levels of isoform 2 are expressed in lung, spleen and small intestine. Isoform 2 is expressed at higher levels than isoform 1 in most tissues except liver, fat and kidney. Isoform 1 and isoform 2 are expressed at low levels in skeletal muscle, heart, stomach and lymph.

The protein localises to the cytoplasm. Its subcellular location is the cell junction. The protein resides in the focal adhesion. It is found in the cytoskeleton. It localises to the stress fiber. The protein localises to the cell membrane. Its subcellular location is the cell projection. The protein resides in the ruffle. It is found in the lamellipodium. Actin-binding protein involved in actin cytoskeleton regulation and dynamics. Increases the number and size of actin stress fibers and inhibits membrane ruffling. Inhibits actin filament depolymerization. Bundles actin filaments, delays filament nucleation and reduces formation of branched filaments. Acts as a negative regulator of primary cilium formation. Plays a role in cholesterol homeostasis. Influences plasma cholesterol levels through regulation of intestinal cholesterol absorption. May act as a scaffold protein by regulating NPC1L1 transportation, an essential protein for cholesterol absorption, to the plasma membrane by recruiting MYO5B to NPC1L1, and thus facilitates cholesterol uptake. This is LIM domain and actin-binding protein 1 from Sus scrofa (Pig).